A 445-amino-acid chain; its full sequence is Questin oxidase (445 aa).

This sequence belongs to the questin oxidase family. Requires NADPH as cofactor. Specifically expressed in conidia.

It participates in secondary metabolite biosynthesis. Functionally, questin oxidase; part of the gene cluster that mediates the biosynthesis of trypacidin, a mycotoxin with antiprotozoal activity and that plays a role in the infection process. The pathway begins with the synthesis of atrochrysone thioester by the polyketide synthase (PKS) tpcC. The atrochrysone carboxyl ACP thioesterase tpcB then breaks the thioester bond and releases the atrochrysone carboxylic acid from tpcC. The decarboxylase tpcK converts atrochrysone carboxylic acid to atrochrysone which is further reduced into emodin anthrone. The next step is performed by the emodin anthrone oxygenase tpcL that catalyzes the oxidation of emodinanthrone to emodin. Emodin O-methyltransferase encoded by tpcA catalyzes methylation of the 8-hydroxy group of emodin to form questin. Ring cleavage of questin by questin oxidase tpcI leads to desmethylsulochrin via several intermediates including questin epoxide. Another methylation step catalyzed by tpcM leads to the formation of sulochrin which is further converted to monomethylsulfochrin by tpcH. Finally, the tpcJ catalyzes the conversion of monomethylsulfochrin to trypacidin. Trypacidin is toxic for human pulmonary and bronchial epithelial cells by initiating the intracellular formation of nitric oxide (NO) and hydrogen peroxide (H(2)O(2)), thus triggering host necrotic cell death. The trypacidin pathway is also able to produce endocrocin via a distinct route from the endocrocin Enc pathway. The polypeptide is Questin oxidase (Aspergillus fumigatus (strain ATCC MYA-4609 / CBS 101355 / FGSC A1100 / Af293) (Neosartorya fumigata)).